The primary structure comprises 545 residues: MSLFSIIKDCGGIHNIQRVLIPDSRIIIEIHEFELLSAEAKQQAYNLTLKQVTYQQTVIENKDEFGAQLLEIGQLISDQQRQDITPYTAPVECEFRPDWHISPPQGLLNDPNGFIYHQGQYHLFYQWYPYTCVHKDKYWAHLTSKDLVNWQWQPVALTPSDWFDSYGVFSGHAISQDDLLMLFYTGNVRIGEQRDRHTTQCLATSTDGIHFTKQGPVVPELPPGVTPHCRDPKVIRHNDRWLMLLGVQREDEIGRLAIYHSEDLKTWTFIALCGDELGDFGYMWECPDFFTLNQQDFIVIGPQGIRSPDKSHTAPHHNGIVKAQLETSGKALLSDFQPLDYGFDFYAPQSLETPDGRRIMCAWMGLPDEIDHPSADNGWVHQLTTMRELSYDNGALIQKPIKELATLRHTPIVLSKDETSFDLHSKAFELQVSMQWGSVLRLHQSESGYCEIRLDSASRRLYIDRSNTLIREGDTVREMSLAESDSVQLHIFSDTSSLEVFINEGEAVMSARVFTDKNSTQLSFDGDVQIQACWLLNKASAPFIS.

Residues 107–110 (LLND), Gln126, 169–170 (FS), 230–231 (RD), and Glu285 each bind substrate. Residue Asp110 is part of the active site.

This sequence belongs to the glycosyl hydrolase 32 family.

Its subcellular location is the cytoplasm. The catalysed reaction is Hydrolysis of terminal non-reducing beta-D-fructofuranoside residues in beta-D-fructofuranosides.. Its pathway is glycan biosynthesis; sucrose metabolism. In terms of biological role, enables the bacterium to metabolize sucrose as a sole carbon source. The sequence is that of Probable sucrose-6-phosphate hydrolase from Psychromonas ingrahamii (strain DSM 17664 / CCUG 51855 / 37).